The following is a 347-amino-acid chain: Beta-hexosaminidase (347 aa).

Substrate-binding positions include aspartate 62, arginine 70, arginine 134, and 164 to 165 (KH). Histidine 177 acts as the Proton donor/acceptor in catalysis. Catalysis depends on aspartate 249, which acts as the Nucleophile.

Belongs to the glycosyl hydrolase 3 family. NagZ subfamily.

It localises to the cytoplasm. The catalysed reaction is Hydrolysis of terminal non-reducing N-acetyl-D-hexosamine residues in N-acetyl-beta-D-hexosaminides.. The protein operates within cell wall biogenesis; peptidoglycan recycling. In terms of biological role, plays a role in peptidoglycan recycling by cleaving the terminal beta-1,4-linked N-acetylglucosamine (GlcNAc) from peptide-linked peptidoglycan fragments, giving rise to free GlcNAc, anhydro-N-acetylmuramic acid and anhydro-N-acetylmuramic acid-linked peptides. The protein is Beta-hexosaminidase of Mannheimia succiniciproducens (strain KCTC 0769BP / MBEL55E).